A 703-amino-acid polypeptide reads, in one-letter code: Methionine--tRNA ligase (703 aa).

The short motif at 15–25 (PYANGPVHLGH) is the 'HIGH' region element. Residues Cys-147, Cys-150, Cys-160, and Cys-163 each contribute to the Zn(2+) site. Positions 345–349 (KFSKS) match the 'KMSKS' region motif. Lys-348 is an ATP binding site. Residues 602-703 (DFQKIDLRVA…GEGINGNSVS (102 aa)) form the tRNA-binding domain.

The protein belongs to the class-I aminoacyl-tRNA synthetase family. MetG type 1 subfamily. As to quaternary structure, homodimer. The cofactor is Zn(2+).

The protein resides in the cytoplasm. The enzyme catalyses tRNA(Met) + L-methionine + ATP = L-methionyl-tRNA(Met) + AMP + diphosphate. Functionally, is required not only for elongation of protein synthesis but also for the initiation of all mRNA translation through initiator tRNA(fMet) aminoacylation. The protein is Methionine--tRNA ligase of Chlorobaculum tepidum (strain ATCC 49652 / DSM 12025 / NBRC 103806 / TLS) (Chlorobium tepidum).